Here is a 370-residue protein sequence, read N- to C-terminus: Tomoregulin-1 (370 aa).

Positions 1–36 (MDGLHPASWMLLLGSLAFWSASSLLLFSLALPGARA) are cleaved as a signal peptide. The Extracellular portion of the chain corresponds to 37–320 (SNQLLSECHN…VPSRQKLTHV (284 aa)). Asn-53 carries N-linked (GlcNAc...) asparagine glycosylation. Kazal-like domains lie at 88–135 (ICQF…PCFS) and 179–227 (VCNI…SCIE). Disulfide bonds link Cys-89/Cys-119, Cys-93/Cys-112, Cys-101/Cys-133, Cys-180/Cys-211, Cys-184/Cys-204, Cys-193/Cys-225, Cys-265/Cys-278, Cys-273/Cys-289, and Cys-291/Cys-300. In terms of domain architecture, EGF-like spans 261–301 (NYIPCSENYNGYCVHGKCELSYSSQKASCRCDSGYTGQYCD). The helical transmembrane segment at 321–341 (LIAAIIGAVQIAIIVAIVMCI) threads the bilayer. The Cytoplasmic segment spans residues 342-370 (TRKCPKNNRGRRQKQNLGHFSSDTSSRMV). The tract at residues 349–370 (NRGRRQKQNLGHFSSDTSSRMV) is disordered. Positions 356–370 (QNLGHFSSDTSSRMV) are enriched in polar residues.

The protein belongs to the tomoregulin family. In terms of assembly, interacts with cripto. As to expression, expressed at highest levels in brain, and at lower levels in neuroendocrine tissues. Present in neurons from the diencephalon (at protein level).

It localises to the cell membrane. Inhibits nodal/nr-1 and bmp signaling during neural patterning through interaction with cripto. The chain is Tomoregulin-1 (tmeff1) from Xenopus laevis (African clawed frog).